We begin with the raw amino-acid sequence, 219 residues long: AA11 family lytic polysaccharide monooxygenase A (219 aa).

Positions 1 to 18 are cleaved as a signal peptide; it reads MMLSKVVMGLLTASLAAA. Histidine 19 contributes to the Cu(+) binding site. 3 cysteine pairs are disulfide-bonded: cysteine 58/cysteine 154, cysteine 94/cysteine 116, and cysteine 185/cysteine 218. N-linked (GlcNAc...) asparagine glycosylation occurs at asparagine 80. Histidine 89 is a binding site for Cu(+).

It belongs to the polysaccharide monooxygenase AA11 family. It depends on Cu(2+) as a cofactor.

Lytic polysaccharide monooxygenase (LPMO) that depolymerizes chitin via the oxidation of scissile beta-(1-4)-glycosidic bonds, yielding C1 or C4 oxidation products. Catalysis by LPMOs requires the reduction of the active-site copper from Cu(II) to Cu(I) by a reducing agent and H(2)O(2) or O(2) as a cosubstrate. Has considerable affinity for alpha-chitin and, more so, beta-chitin. Active toward both alpha-chitin and beta-chitin allomorphs and enhances chitin degradation by an endoacting chitinase, in particular for alpha-chitin, and so plays a role in fungal chitin turnover. The catalytic activity increases when supplying reactions with hydrogen peroxide, confirming that it has peroxygenase activity. Does not show activity on phosphoric acid-swollen cellulose (PASC), Avicel, tamarind xyloglucan, birchwood xylan, beechwood xylan, acetyl glucuronoxylan from aspen, ivory nut mannan, acetylated konjac glucomannan, potato starch, heparin, hyaluronic acid, and chitosan. This chain is AA11 family lytic polysaccharide monooxygenase A, found in Aspergillus fumigatus (strain CBS 144.89 / FGSC A1163 / CEA10) (Neosartorya fumigata).